The chain runs to 407 residues: Probable acyl-CoA dehydrogenase FadE2 (407 aa).

This sequence belongs to the acyl-CoA dehydrogenase family. FAD is required as a cofactor.

It carries out the reaction a 2,3-saturated acyl-CoA + A = a 2,3-dehydroacyl-CoA + AH2. In Mycobacterium tuberculosis (strain ATCC 25618 / H37Rv), this protein is Probable acyl-CoA dehydrogenase FadE2.